Reading from the N-terminus, the 333-residue chain is Holliday junction branch migration complex subunit RuvB (333 aa).

The tract at residues 1 to 182 is large ATPase domain (RuvB-L); sequence MDERLLSQSH…FGVTLKLEYY (182 aa). Residues Leu-21, Arg-22, Gly-63, Lys-66, Thr-67, Thr-68, 129–131, Arg-172, Tyr-182, and Arg-219 each bind ATP; that span reads EDY. Thr-67 contacts Mg(2+). The interval 183-253 is small ATPAse domain (RuvB-S); it reads ETHELAAIVS…LASDALDRLH (71 aa). The head domain (RuvB-H) stretch occupies residues 256-333; that stretch reads ALGLDEVDHR…SHFGYEEEEE (78 aa). 2 residues coordinate DNA: Arg-311 and Arg-316.

The protein belongs to the RuvB family. Homohexamer. Forms an RuvA(8)-RuvB(12)-Holliday junction (HJ) complex. HJ DNA is sandwiched between 2 RuvA tetramers; dsDNA enters through RuvA and exits via RuvB. An RuvB hexamer assembles on each DNA strand where it exits the tetramer. Each RuvB hexamer is contacted by two RuvA subunits (via domain III) on 2 adjacent RuvB subunits; this complex drives branch migration. In the full resolvosome a probable DNA-RuvA(4)-RuvB(12)-RuvC(2) complex forms which resolves the HJ.

It is found in the cytoplasm. It catalyses the reaction ATP + H2O = ADP + phosphate + H(+). In terms of biological role, the RuvA-RuvB-RuvC complex processes Holliday junction (HJ) DNA during genetic recombination and DNA repair, while the RuvA-RuvB complex plays an important role in the rescue of blocked DNA replication forks via replication fork reversal (RFR). RuvA specifically binds to HJ cruciform DNA, conferring on it an open structure. The RuvB hexamer acts as an ATP-dependent pump, pulling dsDNA into and through the RuvAB complex. RuvB forms 2 homohexamers on either side of HJ DNA bound by 1 or 2 RuvA tetramers; 4 subunits per hexamer contact DNA at a time. Coordinated motions by a converter formed by DNA-disengaged RuvB subunits stimulates ATP hydrolysis and nucleotide exchange. Immobilization of the converter enables RuvB to convert the ATP-contained energy into a lever motion, pulling 2 nucleotides of DNA out of the RuvA tetramer per ATP hydrolyzed, thus driving DNA branch migration. The RuvB motors rotate together with the DNA substrate, which together with the progressing nucleotide cycle form the mechanistic basis for DNA recombination by continuous HJ branch migration. Branch migration allows RuvC to scan DNA until it finds its consensus sequence, where it cleaves and resolves cruciform DNA. The sequence is that of Holliday junction branch migration complex subunit RuvB from Exiguobacterium sp. (strain ATCC BAA-1283 / AT1b).